The following is an 800-amino-acid chain: Small ribosomal subunit protein uS3c (800 aa).

The S3-like 1st part stretch occupies residues 1-118 (MGQKVHPSGF…LQVKKDILVK (118 aa)). The segment at 119–664 (LQKTRQYLTN…FLDCKFEELE (546 aa)) is intervening sequence (IVS). The tract at residues 665–800 (RRKTMWVQNL…TKLVTESTGA (136 aa)) is S3-like 2nd part.

It belongs to the universal ribosomal protein uS3 family. As to quaternary structure, part of the 30S ribosomal subunit.

Its subcellular location is the plastid. It is found in the chloroplast. The chain is Small ribosomal subunit protein uS3c (rps3) from Chlamydomonas moewusii (Chlamydomonas eugametos).